The chain runs to 296 residues: NAD kinase (296 aa).

The Proton acceptor role is filled by D72. Residues 72–73 (DG), 146–147 (ND), R157, R174, D176, 187–192 (TAYALS), and Q247 each bind NAD(+).

Belongs to the NAD kinase family. A divalent metal cation is required as a cofactor.

Its subcellular location is the cytoplasm. The enzyme catalyses NAD(+) + ATP = ADP + NADP(+) + H(+). Involved in the regulation of the intracellular balance of NAD and NADP, and is a key enzyme in the biosynthesis of NADP. Catalyzes specifically the phosphorylation on 2'-hydroxyl of the adenosine moiety of NAD to yield NADP. In Hahella chejuensis (strain KCTC 2396), this protein is NAD kinase.